The following is an 805-amino-acid chain: Acetyl-CoA decarbonylase/synthase complex subunit alpha 2 (805 aa).

6 residues coordinate [4Fe-4S] cluster: Cys72, Cys75, Cys76, Cys78, Cys83, and Cys93. His116 contacts CO. [Ni-4Fe-4S] cluster is bound by residues His249, Cys277, and Cys322. 4Fe-4S ferredoxin-type domains are found at residues 407–435 (EEFKVYIDKCVKCGECMLACPEELDIPEA) and 445–474 (EYLEALHDVCIGCRRCEQVCKKEIPILNVL). [4Fe-4S] cluster-binding residues include Cys416, Cys419, Cys422, Cys426, Cys454, Cys457, Cys460, and Cys464. Residues Cys522, Cys551, and Cys586 each coordinate [Ni-4Fe-4S] cluster.

It belongs to the Ni-containing carbon monoxide dehydrogenase family. In terms of assembly, heterotetramer of two alpha and two epsilon subunits. The ACDS complex is made up of alpha, epsilon, beta, gamma and delta subunits with a probable stoichiometry of (alpha(2)epsilon(2))(4)-beta(8)-(gamma(1)delta(1))(8). The cofactor is [4Fe-4S] cluster. [Ni-4Fe-4S] cluster is required as a cofactor.

The enzyme catalyses CO + 2 oxidized [2Fe-2S]-[ferredoxin] + H2O = 2 reduced [2Fe-2S]-[ferredoxin] + CO2 + 2 H(+). The protein operates within one-carbon metabolism; methanogenesis from acetate. Its function is as follows. Part of the ACDS complex that catalyzes the reversible cleavage of acetyl-CoA, allowing growth on acetate as sole source of carbon and energy. The alpha-epsilon subcomponent functions as a carbon monoxide dehydrogenase. The polypeptide is Acetyl-CoA decarbonylase/synthase complex subunit alpha 2 (Methanosarcina acetivorans (strain ATCC 35395 / DSM 2834 / JCM 12185 / C2A)).